A 246-amino-acid chain; its full sequence is tRNA (guanine-N(7)-)-methyltransferase (246 aa).

4 residues coordinate S-adenosyl-L-methionine: E77, E102, D129, and D152. The active site involves D152. Substrate contacts are provided by residues K156, D188, and 225–228 (TKFE).

It belongs to the class I-like SAM-binding methyltransferase superfamily. TrmB family.

It carries out the reaction guanosine(46) in tRNA + S-adenosyl-L-methionine = N(7)-methylguanosine(46) in tRNA + S-adenosyl-L-homocysteine. The protein operates within tRNA modification; N(7)-methylguanine-tRNA biosynthesis. Its function is as follows. Catalyzes the formation of N(7)-methylguanine at position 46 (m7G46) in tRNA. The sequence is that of tRNA (guanine-N(7)-)-methyltransferase from Haemophilus influenzae (strain ATCC 51907 / DSM 11121 / KW20 / Rd).